Here is a 71-residue protein sequence, read N- to C-terminus: Translation initiation factor IF-1 (71 aa).

One can recognise an S1-like domain in the interval 1–71 (MAKDAIKLRA…TKGRITYRHK (71 aa)).

Belongs to the IF-1 family. Component of the 30S ribosomal translation pre-initiation complex which assembles on the 30S ribosome in the order IF-2 and IF-3, IF-1 and N-formylmethionyl-tRNA(fMet); mRNA recruitment can occur at any time during PIC assembly.

It localises to the cytoplasm. Its function is as follows. One of the essential components for the initiation of protein synthesis. Stabilizes the binding of IF-2 and IF-3 on the 30S subunit to which N-formylmethionyl-tRNA(fMet) subsequently binds. Helps modulate mRNA selection, yielding the 30S pre-initiation complex (PIC). Upon addition of the 50S ribosomal subunit IF-1, IF-2 and IF-3 are released leaving the mature 70S translation initiation complex. The protein is Translation initiation factor IF-1 of Mycoplasmopsis synoviae (strain 53) (Mycoplasma synoviae).